Reading from the N-terminus, the 1404-residue chain is DNA-directed RNA polymerase subunit beta' (1404 aa).

Zn(2+) contacts are provided by Cys-70, Cys-72, Cys-85, and Cys-88. Mg(2+) is bound by residues Asp-460, Asp-462, and Asp-464. 4 residues coordinate Zn(2+): Cys-814, Cys-888, Cys-895, and Cys-898.

The protein belongs to the RNA polymerase beta' chain family. The RNAP catalytic core consists of 2 alpha, 1 beta, 1 beta' and 1 omega subunit. When a sigma factor is associated with the core the holoenzyme is formed, which can initiate transcription. The cofactor is Mg(2+). Zn(2+) serves as cofactor.

The catalysed reaction is RNA(n) + a ribonucleoside 5'-triphosphate = RNA(n+1) + diphosphate. In terms of biological role, DNA-dependent RNA polymerase catalyzes the transcription of DNA into RNA using the four ribonucleoside triphosphates as substrates. The sequence is that of DNA-directed RNA polymerase subunit beta' from Shewanella piezotolerans (strain WP3 / JCM 13877).